Consider the following 445-residue polypeptide: Proline--tRNA ligase (445 aa).

This sequence belongs to the class-II aminoacyl-tRNA synthetase family. ProS type 2 subfamily. As to quaternary structure, homodimer.

The protein localises to the cytoplasm. The catalysed reaction is tRNA(Pro) + L-proline + ATP = L-prolyl-tRNA(Pro) + AMP + diphosphate. Catalyzes the attachment of proline to tRNA(Pro) in a two-step reaction: proline is first activated by ATP to form Pro-AMP and then transferred to the acceptor end of tRNA(Pro). This chain is Proline--tRNA ligase, found in Dinoroseobacter shibae (strain DSM 16493 / NCIMB 14021 / DFL 12).